Here is a 404-residue protein sequence, read N- to C-terminus: Probable tRNA sulfurtransferase (404 aa).

Positions 60–165 (QPVAESLKQI…EEAAYISYET (106 aa)) constitute a THUMP domain. Residues 183–184 (ML), 208–209 (HF), arginine 265, glycine 287, and glutamine 296 contribute to the ATP site.

It belongs to the ThiI family.

The protein resides in the cytoplasm. It carries out the reaction [ThiI sulfur-carrier protein]-S-sulfanyl-L-cysteine + a uridine in tRNA + 2 reduced [2Fe-2S]-[ferredoxin] + ATP + H(+) = [ThiI sulfur-carrier protein]-L-cysteine + a 4-thiouridine in tRNA + 2 oxidized [2Fe-2S]-[ferredoxin] + AMP + diphosphate. The catalysed reaction is [ThiS sulfur-carrier protein]-C-terminal Gly-Gly-AMP + S-sulfanyl-L-cysteinyl-[cysteine desulfurase] + AH2 = [ThiS sulfur-carrier protein]-C-terminal-Gly-aminoethanethioate + L-cysteinyl-[cysteine desulfurase] + A + AMP + 2 H(+). It participates in cofactor biosynthesis; thiamine diphosphate biosynthesis. Its function is as follows. Catalyzes the ATP-dependent transfer of a sulfur to tRNA to produce 4-thiouridine in position 8 of tRNAs, which functions as a near-UV photosensor. Also catalyzes the transfer of sulfur to the sulfur carrier protein ThiS, forming ThiS-thiocarboxylate. This is a step in the synthesis of thiazole, in the thiamine biosynthesis pathway. The sulfur is donated as persulfide by IscS. This is Probable tRNA sulfurtransferase from Streptococcus gordonii (strain Challis / ATCC 35105 / BCRC 15272 / CH1 / DL1 / V288).